Consider the following 207-residue polypeptide: Ribosome maturation factor RimP (207 aa).

The interval 171–207 (RAPGGAPEEGEEDTTEAAPEGAGKSPKPGRRPARKTH) is disordered. Over residues 197 to 207 (KPGRRPARKTH) the composition is skewed to basic residues.

Belongs to the RimP family.

The protein localises to the cytoplasm. In terms of biological role, required for maturation of 30S ribosomal subunits. This is Ribosome maturation factor RimP from Gluconacetobacter diazotrophicus (strain ATCC 49037 / DSM 5601 / CCUG 37298 / CIP 103539 / LMG 7603 / PAl5).